The primary structure comprises 232 residues: MKIALLQHTPDPEAAVALAARLCYASVGIDELREKLSASDVTAFLDKIMSLGHQSVLEHASFTFGIEGISRAASHQLVRHRIASYSQQSQRYVTFRGDGFPRVVPGSVSATEKRRQVFESAMQACADAYRALVDDGVPAEDARFVLPNAAETKIIVTMNARELIHFFGLRCCERAQWEIRALAVEMLRLVKGVAPTIFRDAGPGCLTGPCPEGGMTCGKAAEVKRLFREMSI.

One can recognise a ThyX domain in the interval Met-1–Gly-204. Residues Ser-55, Arg-79 to Arg-81, and Gln-87 each bind FAD. DUMP-binding positions include Gln-76–Arg-79, Gln-87–Arg-91, and Arg-143. Positions Arg-79–Ser-89 match the ThyX motif motif. Residues Asn-159–Arg-161 and His-165 each bind FAD. Arg-170 provides a ligand contact to dUMP. Residue Arg-170 is the Involved in ionization of N3 of dUMP, leading to its activation of the active site.

The protein belongs to the thymidylate synthase ThyX family. In terms of assembly, homotetramer. The cofactor is FAD.

The enzyme catalyses dUMP + (6R)-5,10-methylene-5,6,7,8-tetrahydrofolate + NADPH + H(+) = dTMP + (6S)-5,6,7,8-tetrahydrofolate + NADP(+). Its pathway is pyrimidine metabolism; dTTP biosynthesis. In terms of biological role, catalyzes the reductive methylation of 2'-deoxyuridine-5'-monophosphate (dUMP) to 2'-deoxythymidine-5'-monophosphate (dTMP) while utilizing 5,10-methylenetetrahydrofolate (mTHF) as the methyl donor, and NADPH and FADH(2) as the reductant. This chain is Flavin-dependent thymidylate synthase, found in Geobacter sulfurreducens (strain ATCC 51573 / DSM 12127 / PCA).